A 204-amino-acid polypeptide reads, in one-letter code: Protein PAXX (204 aa).

A PISA domain is found at 37–79; it reads FNLYVTDAAELWSTCFTPDSLAALKARFGLSAAEDITPRFRAA. Ser-134 carries the phosphoserine modification. Positions 143 to 204 are disordered; sequence EETAVSPRKS…PAGGVDFDET (62 aa). Thr-145 is modified (phosphothreonine). Phosphoserine is present on residues Ser-148 and Ser-152. Residues 171 to 204 are mediates interaction with XRCC5/Ku80 and XRCC6/Ku70 and association with the non-homologous end joining core complex; it reads GPGPGVRRRCPGESLINPGFKSKKPAGGVDFDET. The short motif at 190–204 is the XLM element; it reads FKSKKPAGGVDFDET.

This sequence belongs to the XRCC4-XLF family. PAXX subfamily. In terms of assembly, homodimer. Interacts with the DNA-bound XRCC5/Ku80 and XRCC6/Ku70 heterodimer (Ku complex); the interaction is direct. Associated component of the non-homologous end joining (NHEJ) complex, composed of the core proteins PRKDC, LIG4, XRCC4, XRCC6/Ku70, XRCC5/Ku86 and NHEJ1/XLF. Interacts with POLL (DNA polymerase lambda); promoting POLL recruitment to double-strand breaks (DSBs) and stimulation of the end-filling activity of POLL. Phosphorylation may inhibit interaction with the DNA-bound XRCC5/Ku80 and XRCC6/Ku70 heterodimer (Ku complex).

The protein resides in the nucleus. Its subcellular location is the chromosome. The protein localises to the cytoplasm. Its function is as follows. Non-essential DNA repair protein involved in DNA non-homologous end joining (NHEJ); participates in double-strand break (DSB) repair and V(D)J recombination. May act as a scaffold required for accumulation of the Ku heterodimer, composed of XRCC5/Ku80 and XRCC6/Ku70, at double-strand break sites and promote the assembly and/or stability of the NHEJ machinery. Involved in NHEJ by promoting the ligation of blunt-ended DNA ends. Together with NHEJ1/XLF, collaborates with DNA polymerase lambda (POLL) to promote joining of non-cohesive DNA ends. Constitutes a non-essential component of classical NHEJ: has a complementary but distinct function with NHEJ1/XLF in DNA repair. Able to restrict infection by herpesvirus 1 (HSV-1) via an unknown mechanism. This is Protein PAXX from Homo sapiens (Human).